A 244-amino-acid polypeptide reads, in one-letter code: ATP synthase subunit a (244 aa).

The next 6 membrane-spanning stretches (helical) occupy residues 17–37 (LTNI…AILT), 75–95 (FLAL…LGLP), 112–132 (DPAI…YYGV), 164–184 (LTLG…LGLL), 196–216 (FFLG…WQAF), and 217–237 (SLFI…VYMS).

This sequence belongs to the ATPase A chain family. In terms of assembly, F-type ATPases have 2 components, CF(1) - the catalytic core - and CF(0) - the membrane proton channel. CF(1) has five subunits: alpha(3), beta(3), gamma(1), delta(1), epsilon(1). CF(0) has three main subunits: a(1), b(2) and c(9-12). The alpha and beta chains form an alternating ring which encloses part of the gamma chain. CF(1) is attached to CF(0) by a central stalk formed by the gamma and epsilon chains, while a peripheral stalk is formed by the delta and b chains.

The protein localises to the cell membrane. In terms of biological role, key component of the proton channel; it plays a direct role in the translocation of protons across the membrane. This Bacillus velezensis (strain DSM 23117 / BGSC 10A6 / LMG 26770 / FZB42) (Bacillus amyloliquefaciens subsp. plantarum) protein is ATP synthase subunit a.